The primary structure comprises 353 residues: MKNKILFIDRDGTLIDEPINTFQVDSINKLVFKKYVISSLRKLVELDYKLIMITNQDGLGTESFPLQDFSTAHLFMLSVFRSEGVIFDDILICPHFLDDDCVCRKPKIKMIEPWLDKIDLKKSYVIGDRDTDMQLSNNLKIKGIKYKEDICNWLHITKYIIKHNRYAEIIRRTKETKVSIKVWLDLEETSKIDTGVKFFDHMLEQLSVHSGICMNISVQGDLDIDDHHTIEDTGIVLGEALLQALGKKNGLSRFGFYLPMDESRSNCIMDISNRPYLNFKAKFNHKMAGDLSTNMVEHFFYSLCYSMKITLHLYAEGKNDHHCIESLFKVFGRTLRQAIKIEGNMLPTSKGIL.

Positions 1 to 164 are histidinol-phosphatase; the sequence is MKNKILFIDR…HITKYIIKHN (164 aa). The active-site Nucleophile is Asp-9. Residues Asp-9 and Asp-11 each contribute to the Mg(2+) site. The active-site Proton donor is the Asp-11. Residues Cys-93, His-95, Cys-101, and Cys-103 each coordinate Zn(2+). A Mg(2+)-binding site is contributed by Asp-128. The tract at residues 165–353 is imidazoleglycerol-phosphate dehydratase; sequence RYAEIIRRTK…NMLPTSKGIL (189 aa).

In the N-terminal section; belongs to the histidinol-phosphatase family. The protein in the C-terminal section; belongs to the imidazoleglycerol-phosphate dehydratase family. Mg(2+) serves as cofactor. The cofactor is Zn(2+).

The protein localises to the cytoplasm. The catalysed reaction is D-erythro-1-(imidazol-4-yl)glycerol 3-phosphate = 3-(imidazol-4-yl)-2-oxopropyl phosphate + H2O. The enzyme catalyses L-histidinol phosphate + H2O = L-histidinol + phosphate. The protein operates within amino-acid biosynthesis; L-histidine biosynthesis; L-histidine from 5-phospho-alpha-D-ribose 1-diphosphate: step 6/9. Its pathway is amino-acid biosynthesis; L-histidine biosynthesis; L-histidine from 5-phospho-alpha-D-ribose 1-diphosphate: step 8/9. This Buchnera aphidicola subsp. Acyrthosiphon pisum (strain Tuc7) protein is Histidine biosynthesis bifunctional protein HisB.